A 67-amino-acid chain; its full sequence is Probable Sec-independent protein translocase protein TatE (67 aa).

A helical transmembrane segment spans residues 1 to 21 (MEGISIAKLLIIGALIVLLFG). Residues 44–67 (KDEDTSAARTTAEETPAERVSHKD) form a disordered region.

This sequence belongs to the TatA/E family. TatE subfamily.

It localises to the cell inner membrane. Functionally, part of the twin-arginine translocation (Tat) system that transports large folded proteins containing a characteristic twin-arginine motif in their signal peptide across membranes. TatE shares overlapping functions with TatA. This Pantoea ananatis (strain LMG 20103) protein is Probable Sec-independent protein translocase protein TatE.